Reading from the N-terminus, the 407-residue chain is Protein FAM53B (407 aa).

Disordered regions lie at residues 204-286 (SSSM…RPSL) and 306-380 (ITGE…DTEP). Composition is skewed to basic and acidic residues over residues 264-281 (LNEK…DTHK) and 327-339 (DAVD…HNLK). The short motif at 272 to 275 (KRRR) is the Nuclear localization signal element. The span at 357–369 (ITEEVDWNCDDGT) shows a compositional bias: acidic residues.

It belongs to the FAM53 family. As to quaternary structure, interacts with ctnnb1. As to expression, predominantly expressed in proliferating cells throughout embryonic development.

It is found in the nucleus. Functionally, acts as a regulator of Wnt signaling pathway by regulating beta-catenin (ctnnb1) nuclear localization. This Oryzias latipes (Japanese rice fish) protein is Protein FAM53B.